The following is a 458-amino-acid chain: MSQLNPKVGFVSLGCPKALVDSERILTQLRVEGYDIVPSYDAADVVVVNTCGFIDSAVTESLDAIGEAMNANGKVIVTGCLGKRPEQIREAYPQVLAVSGPQDYQSVMEAVHAALPPRHDPFVDLVPDYGIKLTPRHYAYLKISEGCNHRCSFCIIPSMRGDLVSRPVDEVLREAERLVRGGVKELLVVSQDTSAYGVDLKYAERPWRDRMYQTRMKALCEGLSELGVWTRLHYVYPYPHVDDVIGLMAEGRLLPYLDIPFQHASPRILKLMKRPGAVEKTLERVQRWKAMCPEITVRSTFIVGFPGETDAEFESLLDFLDQAQLDRVGAFAYSPVDGASANALPDQVPEEVKHERLARFMAKQAQISALRLESKIGSVQQCLVDVIEDDIAVARSRADAPEIDGLVHIQNGGELGLKVGDLVDVEITDSDEHDLFGDALPSGPAVQQPGRTLNLQIV.

Residues 6–116 (PKVGFVSLGC…VMEAVHAALP (111 aa)) form the MTTase N-terminal domain. [4Fe-4S] cluster is bound by residues cysteine 15, cysteine 51, cysteine 80, cysteine 147, cysteine 151, and cysteine 154. Residues 133 to 371 (LTPRHYAYLK…AKQAQISALR (239 aa)) enclose the Radical SAM core domain. A TRAM domain is found at 373–441 (ESKIGSVQQC…EHDLFGDALP (69 aa)).

Belongs to the methylthiotransferase family. RimO subfamily. [4Fe-4S] cluster serves as cofactor.

Its subcellular location is the cytoplasm. It carries out the reaction L-aspartate(89)-[ribosomal protein uS12]-hydrogen + (sulfur carrier)-SH + AH2 + 2 S-adenosyl-L-methionine = 3-methylsulfanyl-L-aspartate(89)-[ribosomal protein uS12]-hydrogen + (sulfur carrier)-H + 5'-deoxyadenosine + L-methionine + A + S-adenosyl-L-homocysteine + 2 H(+). Functionally, catalyzes the methylthiolation of an aspartic acid residue of ribosomal protein uS12. This Xanthomonas euvesicatoria pv. vesicatoria (strain 85-10) (Xanthomonas campestris pv. vesicatoria) protein is Ribosomal protein uS12 methylthiotransferase RimO.